Consider the following 577-residue polypeptide: Serine/threonine-protein kinase AGC1-5 (577 aa).

Residues 1–12 show a composition bias toward polar residues; that stretch reads MDLASKKNTANV. The tract at residues 1–151 is disordered; sequence MDLASKKNTA…DYAYGDNLVG (151 aa). The span at 44-55 shows a compositional bias: basic and acidic residues; that stretch reads PHFDPKKMDPLV. 2 stretches are compositionally biased toward polar residues: residues 69–87 and 110–120; these read TRGT…SSDG and LTTSETYSPSA. Residues 185-509 enclose the Protein kinase domain; that stretch reads FRLLKRLGYG…ATEIKQHPFF (325 aa). ATP contacts are provided by residues 191-199 and Lys-214; that span reads LGYGDIGSV. The active-site Proton acceptor is the Asp-310. One can recognise an AGC-kinase C-terminal domain in the interval 510 to 577; the sequence is EGVNWALVRS…DTAYIDFEYF (68 aa).

Belongs to the protein kinase superfamily. AGC Ser/Thr protein kinase family. Interacts with PDPK1/PDK1. In terms of processing, autophosphorylated and phosphorylated by PDPK1/PDK1. Specifically expressed in pollen grains.

It catalyses the reaction L-seryl-[protein] + ATP = O-phospho-L-seryl-[protein] + ADP + H(+). It carries out the reaction L-threonyl-[protein] + ATP = O-phospho-L-threonyl-[protein] + ADP + H(+). Its activity is regulated as follows. Activated by PDPK1/PDK1. Functions redudantly with AGC1-7 as signaling component in the pollen tube. Required for polarized growth of pollen tubes. In Arabidopsis thaliana (Mouse-ear cress), this protein is Serine/threonine-protein kinase AGC1-5.